We begin with the raw amino-acid sequence, 897 residues long: Macoilin (897 aa).

The next 4 helical transmembrane spans lie at 113-133 (ICYLFIPIRMLIFLATTYVWI), 157-177 (QSWPIVFITCFIVIFELFLRI), 181-201 (PILISFFPNVAEYAGVSPVWP), and 204-224 (LNAFFGAHSIGYPVILITVSM). Polar residues-rich tracts occupy residues 291-304 (IQAASATPPTSSKK) and 329-338 (GNSGFNSTPP). The tract at residues 291 to 375 (IQAASATPPT…DTSSSTIEDQ (85 aa)) is disordered. Over residues 351 to 361 (DMDDGDDSDDD) the composition is skewed to acidic residues. Residues 379 to 399 (GGISIIRFIFSSAAWLFSFVF) form a helical membrane-spanning segment. Positions 403 to 413 (TPSENSLSNQQ) are enriched in polar residues. Disordered stretches follow at residues 403 to 535 (TPSE…QEED) and 724 to 770 (NGSS…SPVP). The span at 414–424 (IDDDEDYEDGD) shows a compositional bias: acidic residues. Polar residues predominate over residues 432–451 (TDSMTSTTKGRANTMPSTTR). Composition is skewed to low complexity over residues 452–467 (SQNNNNSQKQQKQSNG) and 475–490 (SHQNNHQKSNGNSNGH). The stretch at 503–726 (DTNASNETDI…VQEFQIKNGS (224 aa)) forms a coiled coil. Positions 510 to 535 (TDIRSMSRELESLRSEISSRRSQEED) are enriched in basic and acidic residues. The span at 734–761 (ETLMNGRSSTEANNENDTTASDQSSPHQ) shows a compositional bias: polar residues.

Strong expression in many neurons, very weak expression is also detected in others tissues.

Its subcellular location is the rough endoplasmic reticulum membrane. The protein localises to the nucleus membrane. Its function is as follows. Plays a role in the regulation of neuronal activity. In AWA and AWC neurons, plays a role in regulating olfactory adaptation by controlling the forgetting sensory responses to odorants such as diacetyl and isoamyl alcohol. May play a role in regulating daf-7 expression in ASI neurons in response to bacterial small RNAs. In ASI neurons, promotes dauer formation in response to pheromones such as the ascarosides ascr#2 and ascr#3. The polypeptide is Macoilin (Caenorhabditis elegans).